The sequence spans 175 residues: NADH-ubiquinone oxidoreductase chain 6 (175 aa).

A run of 6 helical transmembrane segments spans residues 1–21 (MMTYVVFILSIVFVIGLIGSP), 25–45 (SPIYGGLGLIVSGGAGCGMVL), 47–67 (FGGSFLGLMVFLVYLGGMLVV), 88–108 (VVLGAFLLGLMMEFLAVLYVL), 115–137 (LVFKFSGLGDWVVYGMSDFGVFS), and 149–169 (YGVWLVVVTGWSLFVGVVVIM).

This sequence belongs to the complex I subunit 6 family. In terms of assembly, core subunit of respiratory chain NADH dehydrogenase (Complex I) which is composed of 45 different subunits.

The protein localises to the mitochondrion inner membrane. The enzyme catalyses a ubiquinone + NADH + 5 H(+)(in) = a ubiquinol + NAD(+) + 4 H(+)(out). In terms of biological role, core subunit of the mitochondrial membrane respiratory chain NADH dehydrogenase (Complex I) which catalyzes electron transfer from NADH through the respiratory chain, using ubiquinone as an electron acceptor. Essential for the catalytic activity and assembly of complex I. This is NADH-ubiquinone oxidoreductase chain 6 (MT-ND6) from Hippopotamus amphibius (Hippopotamus).